We begin with the raw amino-acid sequence, 350 residues long: Phosphotriesterase-related protein (350 aa).

Positions 22, 24, 169, 201, 230, and 298 each coordinate a divalent metal cation.

Belongs to the metallo-dependent hydrolases superfamily. Phosphotriesterase family. The cofactor is a divalent metal cation.

This chain is Phosphotriesterase-related protein, found in Drosophila sechellia (Fruit fly).